The primary structure comprises 402 residues: CMP-sialic acid transporter 3 (402 aa).

The Cytoplasmic segment spans residues 1–42 (MSGEVECRVCHAKVQVPMAAAAVSKAYDIHRSSVSSRQRALN). Residues 43–63 (VLLVSGDCVLAGLQPILVYMC) traverse the membrane as a helical segment. Residues 64-73 (KVDGKFKFSP) lie on the Lumenal side of the membrane. The helical transmembrane segment at 74 to 94 (VSVNFLTEITKIIFAIIMLCI) threads the bilayer. Residues 95 to 118 (QARRLKVGEKPFLTVSTFMQAARN) are Cytoplasmic-facing. A helical membrane pass occupies residues 119 to 139 (NVLLAVPALFYAINNYMKFVM). At 140–146 (QLYFNPA) the chain is on the lumenal side. Residues 147-167 (TVKMLGNLKVLVIAVLLKVIM) traverse the membrane as a helical segment. At 168-170 (RRR) the chain is on the cytoplasmic side. Residues 171–191 (FSTIQWEALALLLIGISVNQL) traverse the membrane as a helical segment. At 192–202 (KSLPEGSSTLG) the chain is on the lumenal side. The helical transmembrane segment at 203-223 (LPVAAGAYLYTLFFVTVPALA) threads the bilayer. At 224–243 (SVYNEKALKSQFDTSIYLQN) the chain is on the cytoplasmic side. The helical transmembrane segment at 244-264 (LFLYGYGAIFNFLGLVITAII) threads the bilayer. Residues 265–280 (QGPSSFNILEGHSKAT) are Lumenal-facing. Residues 281 to 301 (MFLICNNAAQGILSSFFFKYA) traverse the membrane as a helical segment. At 302–321 (DTILKKYSSTIATIFTGVAS) the chain is on the cytoplasmic side. The chain crosses the membrane as a helical span at residues 322–342 (AVLFGHTLTINFVLAISIVII). At 343–402 (SMHQYLSNQIKDEVPSSKIEMGDAHEHRSKESVVVNVSDSIATEAKHRHGTDERQPLLPV) the chain is on the lumenal side.

It belongs to the nucleotide-sugar transporter family. CMP-Sialate:CMP antiporter (TC 2.A.7.12) subfamily.

Its subcellular location is the golgi apparatus membrane. Sugar transporter involved in the transport of CMP-sialic acid from the cytoplasm into the Golgi. May transport important nucleotide sugars such as CMP-Kdo (2-keto-3-deoxy-D-manno-octulosonic acid) in physiological conditions. The polypeptide is CMP-sialic acid transporter 3 (Oryza sativa subsp. indica (Rice)).